The primary structure comprises 347 residues: D-alanine--D-alanine ligase (347 aa).

The ATP-grasp domain occupies 131–333 (KRVLESAGIA…YPDLIERLVE (203 aa)). Residue 161–216 (EEELTYPVFTKPSNMGSSVGISKSENQEELRQALKLAFQYDSRVLVEQGVNAREIE) coordinates ATP. The Mg(2+) site is built by aspartate 287, glutamate 300, and asparagine 302.

The protein belongs to the D-alanine--D-alanine ligase family. Mg(2+) serves as cofactor. The cofactor is Mn(2+).

Its subcellular location is the cytoplasm. The enzyme catalyses 2 D-alanine + ATP = D-alanyl-D-alanine + ADP + phosphate + H(+). It participates in cell wall biogenesis; peptidoglycan biosynthesis. Functionally, cell wall formation. The sequence is that of D-alanine--D-alanine ligase from Streptococcus pneumoniae (strain Hungary19A-6).